Here is a 255-residue protein sequence, read N- to C-terminus: PABIR family member 2 (255 aa).

Residues Met-1–Asn-24 form a disordered region. Position 2 is an N-acetylalanine (Ala-2). 4 positions are modified to phosphoserine: Ser-25, Ser-33, Ser-50, and Ser-58. Thr-112 is subject to Phosphothreonine. Phosphoserine occurs at positions 115 and 119. Arg-122 is subject to Omega-N-methylarginine. A Phosphoserine modification is found at Ser-145. Disordered stretches follow at residues Leu-169–Ser-196 and Ser-219–Ala-238. A compositionally biased stretch (basic and acidic residues) spans Arg-174–Pro-184.

Belongs to the FAM122 family.

In Mus musculus (Mouse), this protein is PABIR family member 2.